A 292-amino-acid chain; its full sequence is MNNGYLAFPQFDPVIFSIGPVSLHWYGLMYLVGFVFAMWLAVRRANKPGSGWKKEEVENLLYAGFLGVFLGGRIGYVLFYNMPLFLENPLYLFKVWDGGMSFHGGLIGVIVVMLVFAHRTKRHFFQVADFIAPLIPFGLGAGRLGNFINGELWGRVDPNLPWAMLFPGSRSEDIALVAAHPQWQQLLSTYGVLPRHPSQLYELILEGVVLFIILNLFIRKSRPMGAVSGLFLIGYGAFRIIVEFFRQPDQQLGLFGGISMGQILSLPMILAGVIMMIWAYRRRPQQRIREAK.

7 consecutive transmembrane segments (helical) span residues 21-41 (VSLH…MWLA), 60-80 (LLYA…VLFY), 98-118 (GGMS…VFAH), 124-144 (FFQV…AGRL), 198-218 (SQLY…NLFI), 225-245 (GAVS…VEFF), and 258-278 (ISMG…MMIW). An a 1,2-diacyl-sn-glycero-3-phospho-(1'-sn-glycerol)-binding site is contributed by Arg143.

It belongs to the Lgt family.

Its subcellular location is the cell inner membrane. It carries out the reaction L-cysteinyl-[prolipoprotein] + a 1,2-diacyl-sn-glycero-3-phospho-(1'-sn-glycerol) = an S-1,2-diacyl-sn-glyceryl-L-cysteinyl-[prolipoprotein] + sn-glycerol 1-phosphate + H(+). It participates in protein modification; lipoprotein biosynthesis (diacylglyceryl transfer). In terms of biological role, catalyzes the transfer of the diacylglyceryl group from phosphatidylglycerol to the sulfhydryl group of the N-terminal cysteine of a prolipoprotein, the first step in the formation of mature lipoproteins. The polypeptide is Phosphatidylglycerol--prolipoprotein diacylglyceryl transferase (Erwinia tasmaniensis (strain DSM 17950 / CFBP 7177 / CIP 109463 / NCPPB 4357 / Et1/99)).